We begin with the raw amino-acid sequence, 396 residues long: Cysteine protease ATG4A (396 aa).

Cys-77 serves as the catalytic Nucleophile. Residues Asp-276 and His-278 contribute to the active site. The LIR signature appears at 390 to 393 (FEIL).

It belongs to the peptidase C54 family. In terms of assembly, interacts with ATG9A; the interaction is direct.

It is found in the cytoplasm. The catalysed reaction is [protein]-C-terminal L-amino acid-glycyl-phosphatidylethanolamide + H2O = [protein]-C-terminal L-amino acid-glycine + a 1,2-diacyl-sn-glycero-3-phosphoethanolamine. With respect to regulation, inhibited by N-ethylmaleimide. Redox-regulated during autophagy since reducing conditions activate ATG4A whereas an oxidizing environment such as the presence of H(2)O(2) inhibits its activity. Its function is as follows. Cysteine protease that plays a key role in autophagy by mediating both proteolytic activation and delipidation of ATG8 family proteins. The protease activity is required for proteolytic activation of ATG8 family proteins: cleaves the C-terminal amino acid of ATG8 proteins to reveal a C-terminal glycine. Exposure of the glycine at the C-terminus is essential for ATG8 proteins conjugation to phosphatidylethanolamine (PE) and insertion to membranes, which is necessary for autophagy. Preferred substrate is GABARAPL2 followed by MAP1LC3A and GABARAP. Protease activity is also required to counteract formation of high-molecular weight conjugates of ATG8 proteins (ATG8ylation): acts as a deubiquitinating-like enzyme that removes ATG8 conjugated to other proteins, such as ATG3. In addition to the protease activity, also mediates delipidation of ATG8 family proteins. Catalyzes delipidation of PE-conjugated forms of ATG8 proteins during macroautophagy. Compared to ATG4B, the major protein for proteolytic activation of ATG8 proteins, shows weaker ability to cleave the C-terminal amino acid of ATG8 proteins, while it displays stronger delipidation activity. Involved in phagophore growth during mitophagy independently of its protease activity and of ATG8 proteins: acts by regulating ATG9A trafficking to mitochondria and promoting phagophore-endoplasmic reticulum contacts during the lipid transfer phase of mitophagy. The polypeptide is Cysteine protease ATG4A (Mus musculus (Mouse)).